Consider the following 261-residue polypeptide: Phosphatidylglycerol--prolipoprotein diacylglyceryl transferase (261 aa).

The next 4 membrane-spanning stretches (helical) occupy residues 13–33, 50–70, 86–106, and 112–132; these read LQIR…YWYI, VISW…ILFY, WNGG…MYIF, and IDVL…IFFG. Residue Arg133 participates in a 1,2-diacyl-sn-glycero-3-phospho-(1'-sn-glycerol) binding. The next 3 helical transmembrane spans lie at 169–189, 197–217, and 232–252; these read LYEA…LFFF, GMLS…IEFV, and ITMG…FIKL.

It belongs to the Lgt family.

The protein localises to the cell inner membrane. It catalyses the reaction L-cysteinyl-[prolipoprotein] + a 1,2-diacyl-sn-glycero-3-phospho-(1'-sn-glycerol) = an S-1,2-diacyl-sn-glyceryl-L-cysteinyl-[prolipoprotein] + sn-glycerol 1-phosphate + H(+). It participates in protein modification; lipoprotein biosynthesis (diacylglyceryl transfer). In terms of biological role, catalyzes the transfer of the diacylglyceryl group from phosphatidylglycerol to the sulfhydryl group of the N-terminal cysteine of a prolipoprotein, the first step in the formation of mature lipoproteins. This is Phosphatidylglycerol--prolipoprotein diacylglyceryl transferase from Ehrlichia canis (strain Jake).